The primary structure comprises 1025 residues: Kinesin-like protein KIN-14P (1025 aa).

Disordered stretches follow at residues Met-1 to Gly-87 and Tyr-263 to Glu-286. Positions Ser-15–Ser-28 are enriched in low complexity. A compositionally biased stretch (basic and acidic residues) spans Val-29–Thr-41. A compositionally biased stretch (low complexity) spans Pro-42–Ser-53. Over residues Lys-65 to Gln-75 the composition is skewed to polar residues. The stretch at His-203–Asn-425 forms a coiled coil. Residues Thr-270 to Glu-286 are compositionally biased toward basic and acidic residues. The 330-residue stretch at Asn-509 to Val-838 folds into the Kinesin motor domain. Gly-593–Thr-600 serves as a coordination point for ATP. A coiled-coil region spans residues Lys-847 to Gln-879. 3 disordered regions span residues Gln-881 to Ala-926, Ala-939 to Asp-977, and Thr-994 to Ala-1025. Polar residues-rich tracts occupy residues Ser-901–Ser-913 and Ala-939–Ile-948. The segment covering Val-950 to Lys-962 has biased composition (basic and acidic residues). 2 stretches are compositionally biased toward low complexity: residues Ser-963–Arg-974 and Ser-998–Ser-1016.

Belongs to the TRAFAC class myosin-kinesin ATPase superfamily. Kinesin family. KIN-14 subfamily.

The sequence is that of Kinesin-like protein KIN-14P from Arabidopsis thaliana (Mouse-ear cress).